The primary structure comprises 438 residues: Trigger factor (438 aa).

Positions 162–247 constitute a PPIase FKBP-type domain; it reads GDIVTIDFEG…VKDIKVKELP (86 aa).

This sequence belongs to the FKBP-type PPIase family. Tig subfamily.

The protein localises to the cytoplasm. It carries out the reaction [protein]-peptidylproline (omega=180) = [protein]-peptidylproline (omega=0). Functionally, involved in protein export. Acts as a chaperone by maintaining the newly synthesized protein in an open conformation. Functions as a peptidyl-prolyl cis-trans isomerase. This is Trigger factor from Caldicellulosiruptor bescii (strain ATCC BAA-1888 / DSM 6725 / KCTC 15123 / Z-1320) (Anaerocellum thermophilum).